The primary structure comprises 101 residues: CLAVATA3/ESR (CLE)-related protein 18 (101 aa).

Residues 1 to 25 (MHLLKGGVVLIITLILFLITSSIVA) form the signal peptide. The segment at 37–58 (RQIPTGPDPLHNPPQPSPKHHH) is disordered. Hydroxyproline is present on residues proline 40 and proline 43. Over residues 42 to 53 (GPDPLHNPPQPS) the composition is skewed to pro residues. Proline 43 carries O-linked (Ara...) hydroxyproline glycosylation. Sulfotyrosine is present on tyrosine 76. Position 84 is a hydroxyproline (proline 84).

It belongs to the CLV3/ESR signal peptide family. In terms of processing, the tyrosine sulfation is critical for the function of the peptide. Post-translationally, the O-glycosylation (arabinosylation) of the hydroxyproline Pro-43 enhances binding affinity of the CLE18p peptide for its receptor. Expressed in roots, leaves, siliques and seedlings.

The protein resides in the secreted. The protein localises to the extracellular space. In terms of biological role, root growth factor that regulates the pattern of root growth and lateral root development by modulating the length and the number of cortical cells in the root apical meristem (RAM), and the anticlinal asymmetric cell divisions in lateral root initiation cells. Its function is as follows. Extracellular signal peptide that regulates cell fate. Represses root apical meristem maintenance. Root growth factor that regulates the pattern of root growth and lateral root development. Regulates the transition of protophloem cells from proliferation to differentiation, thus impinging on postembryonic growth capacity of the root meristem; this signaling pathway requires CRN and CLV2. This chain is CLAVATA3/ESR (CLE)-related protein 18, found in Arabidopsis thaliana (Mouse-ear cress).